Consider the following 278-residue polypeptide: uncharacterized protein (278 aa).

The span at 127 to 151 (PPTPSPPPPPAPTQPTRPTPGPAFF) shows a compositional bias: pro residues. A disordered region spans residues 127–174 (PPTPSPPPPPAPTQPTRPTPGPAFFPQPFKVELHHPTPKTSSLPAPSL). The span at 164 to 174 (PKTSSLPAPSL) shows a compositional bias: low complexity.

This is an uncharacterized protein from Botryotinia fuckeliana (Noble rot fungus).